The primary structure comprises 416 residues: Deferrochelatase (416 aa).

Residues 1–28 (MSDEQKKPEQIHRRDILKWGAMAGAAVA) constitute a signal peptide (tat-type signal). Position 241–243 (241–243 (GTG)) interacts with heme b. The disordered stretch occupies residues 293–318 (QEDTFGRRKSSGAPFGQKKETDPVKL). H326 and R339 together coordinate heme b.

Belongs to the DyP-type peroxidase family. Component of the iron transporter efeUOB/M complex composed of EfeU, EfeM and EfeB; EfeU is essential for the complex formation. Heme b serves as cofactor. Post-translationally, exported by the Tat system. The position of the signal peptide cleavage has not been experimentally proven.

It localises to the secreted. Its subcellular location is the cell membrane. It carries out the reaction heme b + 2 H(+) = protoporphyrin IX + Fe(2+). The catalysed reaction is 2 Fe(2+) + H2O2 + 2 H(+) = 2 Fe(3+) + 2 H2O. In terms of biological role, involved in the recovery of exogenous heme iron. Extracts iron from heme while preserving the protoporphyrin ring intact. Part of the iron transporter system efeUOB/M involved in iron import. Catalyzes the peroxide-mediated oxidation of Fe(2+) into Fe(3+); EfeM binds Fe(3+) and delivers it to the cell membrane permease EfeU. The polypeptide is Deferrochelatase (Bacillus subtilis (strain 168)).